A 366-amino-acid chain; its full sequence is L-idonate 5-dehydrogenase (366 aa).

Residues C56, H81, C111, C114, C117, C125, and E167 each coordinate Zn(2+).

Belongs to the zinc-containing alcohol dehydrogenase family. Zn(2+) is required as a cofactor.

It carries out the reaction L-idonate + NAD(+) = 5-dehydro-D-gluconate + NADH + H(+). It participates in carbohydrate acid metabolism; L-idonate degradation. Functionally, involved in the catabolism of ascorbate to tartrate. The enzyme has no activity with NADP(+). The chain is L-idonate 5-dehydrogenase from Vitis vinifera (Grape).